A 332-amino-acid chain; its full sequence is L-lactate dehydrogenase A-like 6A (332 aa).

At alanine 2 the chain carries N-acetylalanine. An N6-acetyllysine; alternate mark is found at lysine 5 and lysine 57. Lysine 5 carries the post-translational modification N6-succinyllysine; alternate. 29 to 57 serves as a coordination point for NAD(+); it reads GSVGVACAISILLKGLSDELVLVDVDEGK. Residue lysine 57 forms a Glycyl lysine isopeptide (Lys-Gly) (interchain with G-Cter in SUMO2); alternate linkage. Lysine 81 bears the N6-acetyllysine mark. Arginine 99 is an NAD(+) binding site. Position 106 (arginine 106) interacts with substrate. Lysine 118 bears the N6-acetyllysine; alternate mark. N6-succinyllysine; alternate is present on lysine 118. Asparagine 138 serves as a coordination point for NAD(+). Positions 138 and 169 each coordinate substrate. Histidine 193 acts as the Proton acceptor in catalysis. Residue lysine 232 is modified to N6-acetyllysine. Tyrosine 239 is modified (phosphotyrosine). Lysine 243 bears the N6-acetyllysine mark. Threonine 248 contributes to the substrate binding site. Threonine 309 is modified (phosphothreonine). The residue at position 318 (lysine 318) is an N6-acetyllysine; alternate. Position 318 is an N6-succinyllysine; alternate (lysine 318). Residue threonine 322 is modified to Phosphothreonine.

The protein belongs to the LDH/MDH superfamily. LDH family. In terms of tissue distribution, testis-specific.

Its subcellular location is the cytoplasm. The catalysed reaction is (S)-lactate + NAD(+) = pyruvate + NADH + H(+). It participates in fermentation; pyruvate fermentation to lactate; (S)-lactate from pyruvate: step 1/1. Functionally, catalyzes the interconversion of L-lactate and pyruvate with nicotinamide adenine dinucleotide NAD(+) as a coenzyme. Significantly increases the transcriptional activity of JUN, when overexpressed. This Homo sapiens (Human) protein is L-lactate dehydrogenase A-like 6A (LDHAL6A).